The following is a 353-amino-acid chain: tRNA N6-adenosine threonylcarbamoyltransferase (353 aa).

Residues H109 and H113 each coordinate Fe cation. Substrate-binding positions include 136 to 140 (TVSGG), D169, G182, D186, and N284. D312 contributes to the Fe cation binding site.

Belongs to the KAE1 / TsaD family. The cofactor is Fe(2+).

It is found in the cytoplasm. It catalyses the reaction L-threonylcarbamoyladenylate + adenosine(37) in tRNA = N(6)-L-threonylcarbamoyladenosine(37) in tRNA + AMP + H(+). Its function is as follows. Required for the formation of a threonylcarbamoyl group on adenosine at position 37 (t(6)A37) in tRNAs that read codons beginning with adenine. Is involved in the transfer of the threonylcarbamoyl moiety of threonylcarbamoyl-AMP (TC-AMP) to the N6 group of A37, together with TsaE and TsaB. TsaD likely plays a direct catalytic role in this reaction. The sequence is that of tRNA N6-adenosine threonylcarbamoyltransferase from Chlorobaculum tepidum (strain ATCC 49652 / DSM 12025 / NBRC 103806 / TLS) (Chlorobium tepidum).